A 499-amino-acid polypeptide reads, in one-letter code: Lysine--tRNA ligase (499 aa).

Residues glutamate 410 and glutamate 417 each coordinate Mg(2+).

It belongs to the class-II aminoacyl-tRNA synthetase family. Homodimer. Requires Mg(2+) as cofactor.

Its subcellular location is the cytoplasm. The catalysed reaction is tRNA(Lys) + L-lysine + ATP = L-lysyl-tRNA(Lys) + AMP + diphosphate. This Bacillus subtilis (strain 168) protein is Lysine--tRNA ligase (lysS).